We begin with the raw amino-acid sequence, 484 residues long: Ribosomal RNA small subunit methyltransferase F (484 aa).

S-adenosyl-L-methionine-binding positions include 119-125 (ASAPGSK), Glu-143, Asp-170, and Asp-188. The Nucleophile role is filled by Cys-241.

It belongs to the class I-like SAM-binding methyltransferase superfamily. RsmB/NOP family.

Its subcellular location is the cytoplasm. It catalyses the reaction cytidine(1407) in 16S rRNA + S-adenosyl-L-methionine = 5-methylcytidine(1407) in 16S rRNA + S-adenosyl-L-homocysteine + H(+). Its function is as follows. Specifically methylates the cytosine at position 1407 (m5C1407) of 16S rRNA. The protein is Ribosomal RNA small subunit methyltransferase F of Shewanella frigidimarina (strain NCIMB 400).